The sequence spans 463 residues: Glutamate--tRNA ligase 1 (463 aa).

The short motif at 10–20 (PSPTGYLHIGG) is the 'HIGH' region element. The short motif at 238–242 (KLSKR) is the 'KMSKS' region element. Residue lysine 241 participates in ATP binding.

It belongs to the class-I aminoacyl-tRNA synthetase family. Glutamate--tRNA ligase type 1 subfamily. In terms of assembly, monomer.

It localises to the cytoplasm. The catalysed reaction is tRNA(Glu) + L-glutamate + ATP = L-glutamyl-tRNA(Glu) + AMP + diphosphate. Its function is as follows. Catalyzes the attachment of glutamate to tRNA(Glu) in a two-step reaction: glutamate is first activated by ATP to form Glu-AMP and then transferred to the acceptor end of tRNA(Glu). The chain is Glutamate--tRNA ligase 1 from Helicobacter pylori (strain Shi470).